The following is a 194-amino-acid chain: uncharacterized protein (194 aa).

The segment at 62–93 (GGAGRRTSKAQRVHPQPSHQRQPPPPQHPGPY) is disordered.

Expressed most abundantly in the brain at protein level. Present in cortex, cerebellum and midbrain. Found in neurons. Elevated expressions detected in Alzheimer brain samples. Also expressed in testis.

The protein resides in the cytoplasm. This is an uncharacterized protein from Homo sapiens (Human).